We begin with the raw amino-acid sequence, 258 residues long: MQTPHSQPESAPQGEQSTHFGFQSVPEADKARKVAEVFHSVASRYDVMNDLMSAGLHRVWKAFTIGRAAVRPGMKVLDIAGGTGDLARAFAKRAGPSGEVWLTDINESMLRVGRDRLTDSGLLVPTAVCDAERLPFPSQYFDRVSVAFGLRNMTHKDRALAEMTRVLKPGGKLLVLEFSRVAKPLAPAYDWYSFNVLPWMGKKVANDEASYRYLAESIRMHPDQETLAGMLRDAGLDRVQYFNLTAGVAALHEGVRLG.

Residues T83, D104, and 130-131 each bind S-adenosyl-L-methionine; that span reads DA.

Belongs to the class I-like SAM-binding methyltransferase superfamily. MenG/UbiE family.

The enzyme catalyses a 2-demethylmenaquinol + S-adenosyl-L-methionine = a menaquinol + S-adenosyl-L-homocysteine + H(+). It catalyses the reaction a 2-methoxy-6-(all-trans-polyprenyl)benzene-1,4-diol + S-adenosyl-L-methionine = a 5-methoxy-2-methyl-3-(all-trans-polyprenyl)benzene-1,4-diol + S-adenosyl-L-homocysteine + H(+). Its pathway is quinol/quinone metabolism; menaquinone biosynthesis; menaquinol from 1,4-dihydroxy-2-naphthoate: step 2/2. It participates in cofactor biosynthesis; ubiquinone biosynthesis. Functionally, methyltransferase required for the conversion of demethylmenaquinol (DMKH2) to menaquinol (MKH2) and the conversion of 2-polyprenyl-6-methoxy-1,4-benzoquinol (DDMQH2) to 2-polyprenyl-3-methyl-6-methoxy-1,4-benzoquinol (DMQH2). The polypeptide is Ubiquinone/menaquinone biosynthesis C-methyltransferase UbiE (Bordetella bronchiseptica (strain ATCC BAA-588 / NCTC 13252 / RB50) (Alcaligenes bronchisepticus)).